A 962-amino-acid polypeptide reads, in one-letter code: Nonribosomal peptide synthetase atqA (962 aa).

Residues 34–462 (AANTTEGIIA…DGRTKEMVNI (429 aa)) are adenylation (A) domain. A Carrier domain is found at 595–672 (SAEEATILSI…GLCQRIAATS (78 aa)). S630 is subject to O-(pantetheine 4'-phosphoryl)serine. The thioesterase (TE) domain stretch occupies residues 694–951 (PLWLVHPGVG…KPEYVANFAK (258 aa)).

Belongs to the NRP synthetase family.

Its pathway is secondary metabolite biosynthesis. Its function is as follows. Nonribosomal peptide synthetase; part of the gene cluster that mediates the biosynthesis of asterriquinone CT5, a natural product that displays potential biological activities including antitumor and insulin mimic activities. The nonribosomal peptide synthetase atqA is responsible for the production of the benzoquinone derivative didemethylasterriquinone D (DDAQ D), via condensation of 2 indole pyruvic acid (IPA) molecules. The symmetric connectivity of the 2 IPA molecules is thought to arise by head-to-tail dual Claisen condensations catalyzed by the TE domain of atqA. DDAQ D represents the core structure of asterriquinones and is further modified by yet unidentified tailoring enzymes to lead to the production of asterriquinone CT5. This is Nonribosomal peptide synthetase atqA from Aspergillus terreus (strain NIH 2624 / FGSC A1156).